We begin with the raw amino-acid sequence, 104 residues long: Co-chaperonin GroES 3 (104 aa).

It belongs to the GroES chaperonin family. Heptamer of 7 subunits arranged in a ring. Interacts with the chaperonin GroEL.

The protein resides in the cytoplasm. In terms of biological role, together with the chaperonin GroEL, plays an essential role in assisting protein folding. The GroEL-GroES system forms a nano-cage that allows encapsulation of the non-native substrate proteins and provides a physical environment optimized to promote and accelerate protein folding. GroES binds to the apical surface of the GroEL ring, thereby capping the opening of the GroEL channel. This chain is Co-chaperonin GroES 3, found in Bradyrhizobium diazoefficiens (strain JCM 10833 / BCRC 13528 / IAM 13628 / NBRC 14792 / USDA 110).